The following is a 104-amino-acid chain: MVRYRMRSPSEGQHQGPGQDHEREEQGQGQELSPERVEDYGRTERGHHHRHRRCKRLHRIHKRRRSCRRRRRHSCRHRRRHRRGCRRSRRRRSCRCRKCRWHYY.

Residues 1-91 (MVRYRMRSPS…RRGCRRSRRR (91 aa)) form a disordered region. Serine 8, serine 10, and serine 33 each carry phosphoserine. Basic and acidic residues predominate over residues 33–44 (SPERVEDYGRTE). Over residues 45–91 (RGHHHRHRRCKRLHRIHKRRRSCRRRRRHSCRHRRRHRRGCRRSRRR) the composition is skewed to basic residues.

Belongs to the protamine P2 family. Interacts with TDRP. Post-translationally, proteolytic processing into mature chains is required for histone eviction during spermatogenesis. Transition proteins (TNP1 and TNP2) are required for processing. Testis.

Its subcellular location is the nucleus. It localises to the chromosome. Functionally, protamines substitute for histones in the chromatin of sperm during the haploid phase of spermatogenesis. They compact sperm DNA into a highly condensed, stable and inactive complex. This Rattus norvegicus (Rat) protein is Protamine-2 (Prm2).